A 195-amino-acid polypeptide reads, in one-letter code: Protein GrpE (195 aa).

The protein belongs to the GrpE family. In terms of assembly, homodimer.

Its subcellular location is the cytoplasm. In terms of biological role, participates actively in the response to hyperosmotic and heat shock by preventing the aggregation of stress-denatured proteins, in association with DnaK and GrpE. It is the nucleotide exchange factor for DnaK and may function as a thermosensor. Unfolded proteins bind initially to DnaJ; upon interaction with the DnaJ-bound protein, DnaK hydrolyzes its bound ATP, resulting in the formation of a stable complex. GrpE releases ADP from DnaK; ATP binding to DnaK triggers the release of the substrate protein, thus completing the reaction cycle. Several rounds of ATP-dependent interactions between DnaJ, DnaK and GrpE are required for fully efficient folding. The protein is Protein GrpE of Francisella tularensis subsp. mediasiatica (strain FSC147).